The following is a 285-amino-acid chain: Bifunctional protein FolD (285 aa).

Residues 165–167 (GRG), T192, and V233 each bind NADP(+).

This sequence belongs to the tetrahydrofolate dehydrogenase/cyclohydrolase family. As to quaternary structure, homodimer.

It catalyses the reaction (6R)-5,10-methylene-5,6,7,8-tetrahydrofolate + NADP(+) = (6R)-5,10-methenyltetrahydrofolate + NADPH. The catalysed reaction is (6R)-5,10-methenyltetrahydrofolate + H2O = (6R)-10-formyltetrahydrofolate + H(+). It functions in the pathway one-carbon metabolism; tetrahydrofolate interconversion. Functionally, catalyzes the oxidation of 5,10-methylenetetrahydrofolate to 5,10-methenyltetrahydrofolate and then the hydrolysis of 5,10-methenyltetrahydrofolate to 10-formyltetrahydrofolate. The protein is Bifunctional protein FolD of Corynebacterium jeikeium (strain K411).